A 128-amino-acid polypeptide reads, in one-letter code: RYamide neuropeptides (128 aa).

A signal peptide spans 1 to 23; sequence MHARKLIVVLVYILTVLVSVAVS. Positions 26 to 29 are excised as a propeptide; it reads YTSE. A Tyrosine amide modification is found at Tyr44. Residues 47-63 constitute a propeptide that is removed on maturation; sequence GGPSPNNKENKVNIRPR. The residue at position 73 (Tyr73) is a Tyrosine amide. Residues 77–128 constitute a propeptide that is removed on maturation; sequence SGWSPNASLVYPVSTPLCGLDEDLSCAYTGISDLYRCTPRKGESEEFTTSSN.

The protein resides in the secreted. Functionally, neuropeptides RYamide-1 and RYamide-2 are ligands for the G-protein coupled receptor RYa-R. RYamide-2 is the most potent activator of RYa-R. The sequence is that of RYamide neuropeptides from Tribolium castaneum (Red flour beetle).